The primary structure comprises 154 residues: Cyanate hydratase (154 aa).

Active-site residues include Arg100, Glu103, and Ser126.

The protein belongs to the cyanase family.

It carries out the reaction cyanate + hydrogencarbonate + 3 H(+) = NH4(+) + 2 CO2. Catalyzes the reaction of cyanate with bicarbonate to produce ammonia and carbon dioxide. This chain is Cyanate hydratase, found in Aspergillus fumigatus (strain CBS 144.89 / FGSC A1163 / CEA10) (Neosartorya fumigata).